The following is a 189-amino-acid chain: Large ribosomal subunit protein eL19A (189 aa).

Lysine 21 participates in a covalent cross-link: Glycyl lysine isopeptide (Lys-Gly) (interchain with G-Cter in ubiquitin). Phosphoserine occurs at positions 30 and 37. Glycyl lysine isopeptide (Lys-Gly) (interchain with G-Cter in ubiquitin) cross-links involve residues lysine 53 and lysine 60. The disordered stretch occupies residues 58–85 (HSKSRTRAHAQSKREGRHSGYGKRKGTR). Basic residues predominate over residues 59–68 (SKSRTRAHAQ). A Phosphoserine modification is found at serine 91. Glycyl lysine isopeptide (Lys-Gly) (interchain with G-Cter in ubiquitin) cross-links involve residues lysine 146 and lysine 186. Residues 164-189 (LKNRAARDRRAQRVAEKRDALLKEDA) are disordered.

This sequence belongs to the eukaryotic ribosomal protein eL19 family. In terms of assembly, component of the large ribosomal subunit (LSU). Mature yeast ribosomes consist of a small (40S) and a large (60S) subunit. The 40S small subunit contains 1 molecule of ribosomal RNA (18S rRNA) and 33 different proteins (encoded by 57 genes). The large 60S subunit contains 3 rRNA molecules (25S, 5.8S and 5S rRNA) and 46 different proteins (encoded by 81 genes). eL19 lies in close proximity to the binding site for eukaryotic initiation factor eIF4G.

The protein resides in the cytoplasm. In terms of biological role, component of the ribosome, a large ribonucleoprotein complex responsible for the synthesis of proteins in the cell. The small ribosomal subunit (SSU) binds messenger RNAs (mRNAs) and translates the encoded message by selecting cognate aminoacyl-transfer RNA (tRNA) molecules. The large subunit (LSU) contains the ribosomal catalytic site termed the peptidyl transferase center (PTC), which catalyzes the formation of peptide bonds, thereby polymerizing the amino acids delivered by tRNAs into a polypeptide chain. The nascent polypeptides leave the ribosome through a tunnel in the LSU and interact with protein factors that function in enzymatic processing, targeting, and the membrane insertion of nascent chains at the exit of the ribosomal tunnel. eL19 may play a role in the last stages of translation initiation, in particular subunit joining and shedding/releasing factors. The protein is Large ribosomal subunit protein eL19A of Saccharomyces cerevisiae (strain ATCC 204508 / S288c) (Baker's yeast).